A 201-amino-acid polypeptide reads, in one-letter code: CASP-like protein 2A1 (201 aa).

Residues 1 to 27 (MEKRDKGSSPMATMMGSRDENEDVENT) are disordered. The Cytoplasmic portion of the chain corresponds to 1 to 30 (MEKRDKGSSPMATMMGSRDENEDVENTTRT). The chain crosses the membrane as a helical span at residues 31-51 (AETMLRLVPMALCVSALVVML). Over 52 to 72 (KNTQTNDYGSLSYSDLGAFRY) the chain is Extracellular. A helical membrane pass occupies residues 73–93 (LVHVNGICAGYSLLSAVIVAM). The Cytoplasmic portion of the chain corresponds to 94 to 101 (PRASTMPR). A helical membrane pass occupies residues 102 to 122 (AWAFFLLDQVLTYVILAAGTV). The Extracellular segment spans residues 123–152 (STEVLYLASKGDTTITWSEACVSFGGFCHK). The helical transmembrane segment at 153–173 (ALISIVITFVVVICYAALSLL) threads the bilayer. Topologically, residues 174 to 201 (SSYKLFSKYDSPVLTYPGKGIEIATFHG) are cytoplasmic.

It belongs to the Casparian strip membrane proteins (CASP) family. In terms of assembly, homodimer and heterodimers.

The protein resides in the cell membrane. The protein is CASP-like protein 2A1 of Populus trichocarpa (Western balsam poplar).